We begin with the raw amino-acid sequence, 667 residues long: Probable potassium transport system protein Kup (667 aa).

12 consecutive transmembrane segments (helical) span residues 16–36, 58–78, 101–121, 146–166, 167–187, 221–241, 253–273, 294–314, 343–363, 373–393, 399–419, and 431–451; these read GFIIALGIVYGDIGTSPLYTM, VSLIIWTLTLITTIKYVLIAL, WLIIPAMLGGATLLSDGALTP, TNVILTTLLILMVLFGLQRFG, TGVIGKLFGPVMLVWFSVLGI, IFILGSIFLATTGAEALYSDL, WPFVKVCIILSYCGQAAWILA, VYLVILATLAAIIASQALISG, LYIPVINWSLFAVTSCTVLYF, YGLAITITMLMTTILLAYYLI, PLLASLLMAFFAFIEFIFFLA, and VVVLALAIVFVMVIWHAGTVI.

Belongs to the HAK/KUP transporter (TC 2.A.72) family.

Its subcellular location is the cell membrane. It carries out the reaction K(+)(in) + H(+)(in) = K(+)(out) + H(+)(out). Functionally, transport of potassium into the cell. Likely operates as a K(+):H(+) symporter. This chain is Probable potassium transport system protein Kup, found in Streptococcus equi subsp. zooepidemicus (strain MGCS10565).